Reading from the N-terminus, the 422-residue chain is Glucose-1-phosphate adenylyltransferase (422 aa).

Alpha-D-glucose 1-phosphate-binding positions include Tyr110, Gly175, 190 to 191 (EK), and Ser208.

Belongs to the bacterial/plant glucose-1-phosphate adenylyltransferase family. Homotetramer.

It carries out the reaction alpha-D-glucose 1-phosphate + ATP + H(+) = ADP-alpha-D-glucose + diphosphate. Its pathway is glycan biosynthesis; glycogen biosynthesis. Functionally, involved in the biosynthesis of ADP-glucose, a building block required for the elongation reactions to produce glycogen. Catalyzes the reaction between ATP and alpha-D-glucose 1-phosphate (G1P) to produce pyrophosphate and ADP-Glc. This Hydrogenovibrio crunogenus (strain DSM 25203 / XCL-2) (Thiomicrospira crunogena) protein is Glucose-1-phosphate adenylyltransferase.